Consider the following 163-residue polypeptide: Nucleotide-binding protein BA_1166 (163 aa).

This sequence belongs to the YajQ family.

Functionally, nucleotide-binding protein. This chain is Nucleotide-binding protein BA_1166, found in Bacillus anthracis.